We begin with the raw amino-acid sequence, 347 residues long: GMP reductase (347 aa).

108-131 (ADFEKTKQILDLNPALNFVCIDVA) contacts NADP(+). Residues G181 and G183 each coordinate K(+). The active-site Thioimidate intermediate is C186. 216–239 (IVSDGGCTTPGDVAKAFGGGADFV) is an NADP(+) binding site.

This sequence belongs to the IMPDH/GMPR family. GuaC type 1 subfamily. As to quaternary structure, homotetramer.

The enzyme catalyses IMP + NH4(+) + NADP(+) = GMP + NADPH + 2 H(+). In terms of biological role, catalyzes the irreversible NADPH-dependent deamination of GMP to IMP. It functions in the conversion of nucleobase, nucleoside and nucleotide derivatives of G to A nucleotides, and in maintaining the intracellular balance of A and G nucleotides. The protein is GMP reductase of Shigella flexneri.